We begin with the raw amino-acid sequence, 110 residues long: MEVAAKLSGARISAQKARLVADQIRGKKVGDALNLLAFSSKKAAEIMKKVLESAVANAEHNEGADVDDLKVSTVFVNEGRSLKRIMPRAKGRADRIVKRSCHITVKVADK.

It belongs to the universal ribosomal protein uL22 family. As to quaternary structure, part of the 50S ribosomal subunit.

Functionally, this protein binds specifically to 23S rRNA; its binding is stimulated by other ribosomal proteins, e.g. L4, L17, and L20. It is important during the early stages of 50S assembly. It makes multiple contacts with different domains of the 23S rRNA in the assembled 50S subunit and ribosome. In terms of biological role, the globular domain of the protein is located near the polypeptide exit tunnel on the outside of the subunit, while an extended beta-hairpin is found that lines the wall of the exit tunnel in the center of the 70S ribosome. This is Large ribosomal subunit protein uL22 from Stutzerimonas stutzeri (strain A1501) (Pseudomonas stutzeri).